The following is a 470-amino-acid chain: ATP synthase subunit beta (470 aa).

155–162 contacts ATP; sequence GGAGVGKT.

Belongs to the ATPase alpha/beta chains family. In terms of assembly, F-type ATPases have 2 components, CF(1) - the catalytic core - and CF(0) - the membrane proton channel. CF(1) has five subunits: alpha(3), beta(3), gamma(1), delta(1), epsilon(1). CF(0) has three main subunits: a(1), b(2) and c(9-12). The alpha and beta chains form an alternating ring which encloses part of the gamma chain. CF(1) is attached to CF(0) by a central stalk formed by the gamma and epsilon chains, while a peripheral stalk is formed by the delta and b chains.

The protein resides in the cell membrane. The catalysed reaction is ATP + H2O + 4 H(+)(in) = ADP + phosphate + 5 H(+)(out). Functionally, produces ATP from ADP in the presence of a proton gradient across the membrane. The catalytic sites are hosted primarily by the beta subunits. The polypeptide is ATP synthase subunit beta (Staphylococcus saprophyticus subsp. saprophyticus (strain ATCC 15305 / DSM 20229 / NCIMB 8711 / NCTC 7292 / S-41)).